Reading from the N-terminus, the 105-residue chain is Small ribosomal subunit protein uS10 (105 aa).

The protein belongs to the universal ribosomal protein uS10 family. In terms of assembly, part of the 30S ribosomal subunit.

Functionally, involved in the binding of tRNA to the ribosomes. The polypeptide is Small ribosomal subunit protein uS10 (Francisella tularensis subsp. mediasiatica (strain FSC147)).